Here is a 502-residue protein sequence, read N- to C-terminus: ATP synthase subunit alpha (502 aa).

Residues 115-137 (VDGLGPVETTETRPIESPAPGVM) are disordered. An ATP-binding site is contributed by 169 to 176 (GDRQTGKT).

This sequence belongs to the ATPase alpha/beta chains family. In terms of assembly, F-type ATPases have 2 components, CF(1) - the catalytic core - and CF(0) - the membrane proton channel. CF(1) has five subunits: alpha(3), beta(3), gamma(1), delta(1), epsilon(1). CF(0) has three main subunits: a(1), b(2) and c(9-12). The alpha and beta chains form an alternating ring which encloses part of the gamma chain. CF(1) is attached to CF(0) by a central stalk formed by the gamma and epsilon chains, while a peripheral stalk is formed by the delta and b chains.

Its subcellular location is the cell membrane. It carries out the reaction ATP + H2O + 4 H(+)(in) = ADP + phosphate + 5 H(+)(out). Functionally, produces ATP from ADP in the presence of a proton gradient across the membrane. The alpha chain is a regulatory subunit. This chain is ATP synthase subunit alpha, found in Geobacillus stearothermophilus (Bacillus stearothermophilus).